A 1032-amino-acid chain; its full sequence is Suppression of tumorigenicity 18 protein (1032 aa).

Disordered stretches follow at residues 29–76 (RAEE…TNDH), 162–213 (GRDK…LTYN), and 325–354 (RQPK…AKCP). The span at 40 to 51 (NKRKSLLMKPRH) shows a compositional bias: basic residues. Positions 52–76 (YSPDMDCKENPDNRNEDDGLETNDH) are enriched in basic and acidic residues. CCHHC-type zinc fingers lie at residues 344–387 (PRPE…PLEI), 388–431 (LAMH…KLAM), 700–743 (RDLK…LKSL), 744–787 (MAAN…GIKM), 792–835 (EEKE…QKEN), and 845–888 (KLNK…IKKV). Zn(2+) contacts are provided by Cys-353, Cys-358, His-371, Cys-377, Cys-397, Cys-402, His-415, Cys-421, Cys-709, Cys-714, His-727, Cys-733, Cys-753, Cys-758, His-771, Cys-777, Cys-801, Cys-806, His-819, Cys-825, Cys-854, Cys-859, His-872, and Cys-878. Positions 905-974 (IEGDEEIRHL…KELAGLSQAL (70 aa)) form a coiled coil.

Belongs to the MYT1 family. Detected in brain.

It is found in the nucleus. Functionally, repressor that binds to DNA sequences containing a bipartite element consisting of a direct repeat of the sequence 5'-AAAGTTT-3' separated by 2-9 nucleotides. Represses basal transcription activity from target promoters. The protein is Suppression of tumorigenicity 18 protein (St18) of Rattus norvegicus (Rat).